A 248-amino-acid chain; its full sequence is MSLIPSLSLLLMSMVAASYSETVTCEDAQKTCPAVIACSSPGINGFPGKDGRDGTKGEKGEPGQGLRGLQGPPGKLGPPGNPGPSGSPGPKGQKGDPGNSPDCDSSLAVSERKALQTEMARIKKWLTFSLGKQVGNKFFLTNGEMMTFEKVKALCVKFQASVATPRNAAENRAIQNLIKEEAFMGITDEKTEGQFVDLTGNRLTYTNWNEGEPNNAGSDEDCVLLLRNGRWNDVPCSSSHLAVCEFPI.

Positions 1-20 are cleaved as a signal peptide; that stretch reads MSLIPSLSLLLMSMVAASYS. The 58-residue stretch at 42–99 folds into the Collagen-like domain; the sequence is GINGFPGKDGRDGTKGEKGEPGQGLRGLQGPPGKLGPPGNPGPSGSPGPKGQKGDPGN. The tract at residues 43 to 110 is disordered; it reads INGFPGKDGR…PDCDSSLAVS (68 aa). The residue at position 47 (proline 47) is a 4-hydroxyproline. The segment covering 49-61 has biased composition (basic and acidic residues); sequence KDGRDGTKGEKGE. 4 positions are modified to 4-hydroxyproline: proline 73, proline 79, proline 82, and proline 88. The segment covering 75–87 has biased composition (pro residues); it reads KLGPPGNPGPSGS. Positions 112 to 130 form a coiled coil; it reads RKALQTEMARIKKWLTFSL. The 112-residue stretch at 134–245 folds into the C-type lectin domain; it reads VGNKFFLTNG…CSSSHLAVCE (112 aa). Disulfide bonds link cysteine 155-cysteine 244 and cysteine 222-cysteine 236.

As to quaternary structure, oligomeric complex of 3 or more homotrimers. Interacts with MASP1 and MASP2. Interacts with MEP1A and MEP1B and may inhibit their catalytic activity. Post-translationally, hydroxylation on proline residues within the sequence motif, GXPG, is most likely to be 4-hydroxy as this fits the requirement for 4-hydroxylation in vertebrates.

The protein localises to the secreted. In terms of biological role, calcium-dependent lectin involved in innate immune defense. Binds mannose, fucose and N-acetylglucosamine on different microorganisms and activates the lectin complement pathway. Binds to late apoptotic cells, as well as to apoptotic blebs and to necrotic cells, but not to early apoptotic cells, facilitating their uptake by macrophages. This Nomascus concolor (Black crested gibbon) protein is Mannose-binding protein C (MBL2).